The primary structure comprises 359 residues: Protein mab-21-like 2-B (359 aa).

It belongs to the mab-21 family.

The protein resides in the nucleus. It localises to the cytoplasm. Its function is as follows. Required for several aspects of embryonic development including normal development of the eye. The chain is Protein mab-21-like 2-B (mab21l2-b) from Xenopus laevis (African clawed frog).